We begin with the raw amino-acid sequence, 126 residues long: UPF0102 protein Cphamn1_0017 (126 aa).

This sequence belongs to the UPF0102 family.

The polypeptide is UPF0102 protein Cphamn1_0017 (Chlorobium phaeobacteroides (strain BS1)).